The following is a 308-amino-acid chain: rRNA 2'-O-methyltransferase fibrillarin 1 (308 aa).

The segment at 1–68 is disordered; that stretch reads MRPPVTGGRG…PRGGMKGGSK (68 aa). Residues 22 to 35 show a composition bias toward gly residues; that stretch reads GRGFGGGRSFGGGR. Basic residues predominate over residues 42–52; that stretch reads SGPRGRGRGAP. Over residues 53–65 the composition is skewed to gly residues; that stretch reads RGRGGPPRGGMKG. Residues 156-157, 175-176, 200-201, and 220-223 contribute to the S-adenosyl-L-methionine site; these read TT, EF, DA, and DVAQ.

The protein belongs to the methyltransferase superfamily. Fibrillarin family. In terms of assembly, component of box C/D small nucleolar ribonucleoprotein (snoRNP) particles. Interacts with SKP1A. Expressed in roots, leaves and flowers. Expressed in stems.

The protein resides in the nucleus. It localises to the nucleolus. The enzyme catalyses a ribonucleotide in rRNA + S-adenosyl-L-methionine = a 2'-O-methylribonucleotide in rRNA + S-adenosyl-L-homocysteine + H(+). The catalysed reaction is L-glutaminyl-[histone H2A] + S-adenosyl-L-methionine = N(5)-methyl-L-glutaminyl-[histone H2A] + S-adenosyl-L-homocysteine + H(+). Its function is as follows. S-adenosyl-L-methionine-dependent methyltransferase that has the ability to methylate both RNAs and proteins. Involved in pre-rRNA processing. Utilizes the methyl donor S-adenosyl-L-methionine to catalyze the site-specific 2'-hydroxyl methylation of ribose moieties in pre-ribosomal RNA. Site specificity is provided by a guide RNA that base pairs with the substrate. Methylation occurs at a characteristic distance from the sequence involved in base pairing with the guide RNA. Also acts as a protein methyltransferase by mediating methylation of 'Gln-105' of histone H2A (H2AQ105me), a modification that impairs binding of the FACT complex and is specifically present at 35S ribosomal DNA locus. Binds monophosphate phosphoinositides in vitro. This is rRNA 2'-O-methyltransferase fibrillarin 1 from Arabidopsis thaliana (Mouse-ear cress).